A 293-amino-acid chain; its full sequence is Phycoerythrin class 2 subunit gamma, linker polypeptide (293 aa).

Cys-49 contributes to the phycourobilin binding site. The PBS-linker domain occupies 50–229 (AAMGIGIGPR…LGGMKVAISD (180 aa)).

In terms of processing, contains one covalently linked phycourobilin chromophore.

It localises to the cellular thylakoid membrane. In terms of biological role, this protein is a bile pigment-bearing rod linker polypeptide that associates with C-phycoerythrin. The protein is Phycoerythrin class 2 subunit gamma, linker polypeptide (mpeC) of Synechococcus sp. (strain WH8020).